The sequence spans 372 residues: Lipoyl synthase (372 aa).

[4Fe-4S] cluster contacts are provided by Cys37, Cys42, Cys48, Cys63, Cys67, Cys70, and Ser292. In terms of domain architecture, Radical SAM core spans 49-281; that stretch reads WREGTATVML…ERAALEMGFL (233 aa). The segment at 338–372 is disordered; sequence LTAELDPDEPRPPVAPAPASASPARLVPAASLIRR. Low complexity predominate over residues 354–372; sequence APASASPARLVPAASLIRR.

The protein belongs to the radical SAM superfamily. Lipoyl synthase family. Requires [4Fe-4S] cluster as cofactor.

The protein localises to the cytoplasm. The catalysed reaction is [[Fe-S] cluster scaffold protein carrying a second [4Fe-4S](2+) cluster] + N(6)-octanoyl-L-lysyl-[protein] + 2 oxidized [2Fe-2S]-[ferredoxin] + 2 S-adenosyl-L-methionine + 4 H(+) = [[Fe-S] cluster scaffold protein] + N(6)-[(R)-dihydrolipoyl]-L-lysyl-[protein] + 4 Fe(3+) + 2 hydrogen sulfide + 2 5'-deoxyadenosine + 2 L-methionine + 2 reduced [2Fe-2S]-[ferredoxin]. The protein operates within protein modification; protein lipoylation via endogenous pathway; protein N(6)-(lipoyl)lysine from octanoyl-[acyl-carrier-protein]: step 2/2. Functionally, catalyzes the radical-mediated insertion of two sulfur atoms into the C-6 and C-8 positions of the octanoyl moiety bound to the lipoyl domains of lipoate-dependent enzymes, thereby converting the octanoylated domains into lipoylated derivatives. In Sorangium cellulosum (strain So ce56) (Polyangium cellulosum (strain So ce56)), this protein is Lipoyl synthase.